The primary structure comprises 916 residues: DNA gyrase subunit A (916 aa).

The Topo IIA-type catalytic domain maps to 42–544; sequence LPDVRDGLKP…FGGDIADEDL (503 aa). The O-(5'-phospho-DNA)-tyrosine intermediate role is filled by tyrosine 130. Residues 571-577 carry the GyrA-box motif; the sequence is QRRGGRG. A compositionally biased stretch (acidic residues) spans 739–748; the sequence is SDDLEDETAD. Disordered stretches follow at residues 739 to 774 and 897 to 916; these read SDDL…RGMR and ESEL…EAEN.

It belongs to the type II topoisomerase GyrA/ParC subunit family. Heterotetramer, composed of two GyrA and two GyrB chains. In the heterotetramer, GyrA contains the active site tyrosine that forms a transient covalent intermediate with DNA, while GyrB binds cofactors and catalyzes ATP hydrolysis.

The protein localises to the cytoplasm. It carries out the reaction ATP-dependent breakage, passage and rejoining of double-stranded DNA.. Functionally, a type II topoisomerase that negatively supercoils closed circular double-stranded (ds) DNA in an ATP-dependent manner to modulate DNA topology and maintain chromosomes in an underwound state. Negative supercoiling favors strand separation, and DNA replication, transcription, recombination and repair, all of which involve strand separation. Also able to catalyze the interconversion of other topological isomers of dsDNA rings, including catenanes and knotted rings. Type II topoisomerases break and join 2 DNA strands simultaneously in an ATP-dependent manner. The polypeptide is DNA gyrase subunit A (Neisseria gonorrhoeae).